We begin with the raw amino-acid sequence, 438 residues long: Ornithine aminotransferase car2 (438 aa).

At Lys275 the chain carries N6-(pyridoxal phosphate)lysine.

It belongs to the class-III pyridoxal-phosphate-dependent aminotransferase family. It depends on pyridoxal 5'-phosphate as a cofactor.

The protein localises to the cytoplasm. It is found in the nucleus. It catalyses the reaction a 2-oxocarboxylate + L-ornithine = L-glutamate 5-semialdehyde + an L-alpha-amino acid. The protein operates within amino-acid biosynthesis; L-proline biosynthesis; L-glutamate 5-semialdehyde from L-ornithine: step 1/1. The polypeptide is Ornithine aminotransferase car2 (car2) (Schizosaccharomyces pombe (strain 972 / ATCC 24843) (Fission yeast)).